The primary structure comprises 404 residues: Cysteine desulfurase IscS (404 aa).

Pyridoxal 5'-phosphate contacts are provided by residues 75–76 (AT), asparagine 155, glutamine 183, and 203–205 (SAH). Lysine 206 carries the post-translational modification N6-(pyridoxal phosphate)lysine. Threonine 243 is a binding site for pyridoxal 5'-phosphate. Cysteine 328 serves as the catalytic Cysteine persulfide intermediate. Position 328 (cysteine 328) interacts with [2Fe-2S] cluster.

It belongs to the class-V pyridoxal-phosphate-dependent aminotransferase family. NifS/IscS subfamily. In terms of assembly, homodimer. Forms a heterotetramer with IscU, interacts with other sulfur acceptors. Requires pyridoxal 5'-phosphate as cofactor.

It is found in the cytoplasm. It catalyses the reaction (sulfur carrier)-H + L-cysteine = (sulfur carrier)-SH + L-alanine. It participates in cofactor biosynthesis; iron-sulfur cluster biosynthesis. Functionally, master enzyme that delivers sulfur to a number of partners involved in Fe-S cluster assembly, tRNA modification or cofactor biosynthesis. Catalyzes the removal of elemental sulfur atoms from cysteine to produce alanine. Functions as a sulfur delivery protein for Fe-S cluster synthesis onto IscU, an Fe-S scaffold assembly protein, as well as other S acceptor proteins. This Pseudomonas fluorescens (strain ATCC BAA-477 / NRRL B-23932 / Pf-5) protein is Cysteine desulfurase IscS.